Consider the following 239-residue polypeptide: Peptidyl-tRNA hydrolase (239 aa).

Tyrosine 14 is a tRNA binding site. The Proton acceptor role is filled by histidine 19. Positions 64, 66, and 112 each coordinate tRNA. The interval 199 to 227 is disordered; sequence EKPAQKGRSHIRQARPKAPPAELPSSGPM. Basic residues predominate over residues 203–213; it reads QKGRSHIRQAR.

This sequence belongs to the PTH family. Monomer.

The protein localises to the cytoplasm. It carries out the reaction an N-acyl-L-alpha-aminoacyl-tRNA + H2O = an N-acyl-L-amino acid + a tRNA + H(+). Functionally, hydrolyzes ribosome-free peptidyl-tRNAs (with 1 or more amino acids incorporated), which drop off the ribosome during protein synthesis, or as a result of ribosome stalling. Its function is as follows. Catalyzes the release of premature peptidyl moieties from peptidyl-tRNA molecules trapped in stalled 50S ribosomal subunits, and thus maintains levels of free tRNAs and 50S ribosomes. The chain is Peptidyl-tRNA hydrolase from Chelativorans sp. (strain BNC1).